The primary structure comprises 183 residues: MVGIRQYGVFTWVFRTFQLAIDTIVLALASALVNQQTSGGSPGKINFSVAVGSFAILTFFLTAVGRFLPTILGNPWLIAFYDFVNWVFALTGGCCIAVAIRVHACDNQKYLDRNHYTQGSMRRCQELKALCFFLWFMFGLYVASFIVQIFIAKNDTPNYTFRGRGRGKGSGPAVAPRPVMSAV.

The Cytoplasmic segment spans residues 1–8; that stretch reads MVGIRQYG. Residues 9-29 form a helical membrane-spanning segment; sequence VFTWVFRTFQLAIDTIVLALA. Topologically, residues 30 to 44 are extracellular; sequence SALVNQQTSGGSPGK. A helical transmembrane segment spans residues 45–65; it reads INFSVAVGSFAILTFFLTAVG. Residues 66–75 are Cytoplasmic-facing; it reads RFLPTILGNP. Residues 76–96 form a helical membrane-spanning segment; that stretch reads WLIAFYDFVNWVFALTGGCCI. Topologically, residues 97 to 131 are extracellular; the sequence is AVAIRVHACDNQKYLDRNHYTQGSMRRCQELKALC. The helical transmembrane segment at 132–152 threads the bilayer; sequence FFLWFMFGLYVASFIVQIFIA. Over 153–183 the chain is Cytoplasmic; it reads KNDTPNYTFRGRGRGKGSGPAVAPRPVMSAV. The segment at 163-183 is disordered; it reads GRGRGKGSGPAVAPRPVMSAV.

It belongs to the NCE102 family.

The protein resides in the cytoplasm. The protein localises to the golgi apparatus membrane. It is found in the cell membrane. Functionally, involved in membrane organization and might act as a sensor of sphingolipids that regulates plasma membrane function. Involved in a novel pathway of export of proteins that lack a cleavable signal sequence. In Schizosaccharomyces pombe (strain 972 / ATCC 24843) (Fission yeast), this protein is Non-classical export protein 2 homolog (fhn1).